Consider the following 553-residue polypeptide: 5'-nucleotidase (553 aa).

Residues 1 to 21 (MKQGLILKSVLSAAIIASLAG) form the signal peptide. C22 is lipidated: N-palmitoyl cysteine. The S-diacylglycerol cysteine moiety is linked to residue C22. D45, H47, D88, N120, H221, H256, and Q258 together coordinate a divalent metal cation. Residues F432 and 501–507 (FNAAGGD) contribute to the substrate site.

Belongs to the 5'-nucleotidase family. Chloride is required as a cofactor. It depends on Mg(2+) as a cofactor.

It localises to the cell outer membrane. The catalysed reaction is a ribonucleoside 5'-phosphate + H2O = a ribonucleoside + phosphate. Functionally, degradation of extracellular 5'-nucleotides for nutritional needs. This chain is 5'-nucleotidase (nutA), found in Vibrio cholerae serotype O1 (strain ATCC 39315 / El Tor Inaba N16961).